The primary structure comprises 504 residues: Maturase K (504 aa).

Belongs to the intron maturase 2 family. MatK subfamily.

It localises to the plastid. The protein localises to the chloroplast. Functionally, usually encoded in the trnK tRNA gene intron. Probably assists in splicing its own and other chloroplast group II introns. The sequence is that of Maturase K from Pentaplaris doroteae.